A 470-amino-acid polypeptide reads, in one-letter code: 3-isopropylmalate dehydratase large subunit (470 aa).

Residues cysteine 351, cysteine 411, and cysteine 414 each coordinate [4Fe-4S] cluster.

This sequence belongs to the aconitase/IPM isomerase family. LeuC type 1 subfamily. As to quaternary structure, heterodimer of LeuC and LeuD. [4Fe-4S] cluster serves as cofactor.

It carries out the reaction (2R,3S)-3-isopropylmalate = (2S)-2-isopropylmalate. It participates in amino-acid biosynthesis; L-leucine biosynthesis; L-leucine from 3-methyl-2-oxobutanoate: step 2/4. Its function is as follows. Catalyzes the isomerization between 2-isopropylmalate and 3-isopropylmalate, via the formation of 2-isopropylmaleate. The protein is 3-isopropylmalate dehydratase large subunit of Shewanella frigidimarina (strain NCIMB 400).